The chain runs to 772 residues: Protocadherin beta-6 (772 aa).

The N-terminal stretch at 1–28 (METTLAKTPEKRQVVFLAILLLLWEAGS) is a signal peptide. 5 Cadherin domains span residues 31–133 (IRYS…SPEF), 134–242 (PDTE…APEF), 243–346 (VQSL…APKL), 347–450 (TISS…APAF), and 451–560 (TQTS…APFI). Over 31–690 (IRYSIPEETE…QDEDMLTLYL (660 aa)) the chain is Extracellular. Cys-96 and Cys-102 form a disulfide bridge. Residue Asn-169 is glycosylated (N-linked (GlcNAc...) asparagine). Residue Ser-223 is glycosylated (O-linked (Man) serine). O-linked (Man) threonine glycosylation is present at Thr-225. Residue Asn-417 is glycosylated (N-linked (GlcNAc...) asparagine). A glycan (N-linked (GlcNAc...) asparagine) is linked at Asn-566. In terms of domain architecture, Cadherin 6 spans 575 to 675 (LPRAAEPGYL…SQPYLPLPEV (101 aa)). Residues 691–711 (VIALASVSSLFLLSVLLFVGV) traverse the membrane as a helical segment. Residues 712–772 (RLCRRVREAS…DFKFLNHYSQ (61 aa)) are Cytoplasmic-facing.

As to quaternary structure, forms homodimers in trans (molecules expressed by two different cells). Forms promiscuous heterodimers in cis (at the plasma membrane of the same cell) with other protocadherins.

The protein localises to the cell membrane. In terms of biological role, calcium-dependent cell-adhesion protein involved in cells self-recognition and non-self discrimination. Thereby, it is involved in the establishment and maintenance of specific neuronal connections in the brain. This Mus musculus (Mouse) protein is Protocadherin beta-6.